We begin with the raw amino-acid sequence, 258 residues long: Peroxisomal membrane protein 11B (258 aa).

K43 is subject to N6-acetyllysine. The tract at residues 210–258 (VVRNACDLFIPLDKLGLWRCGPGIVGLCGLVSSILSILTLICPWLRLKP) is interaction with PEX19, PEX11G and FIS1 and peroxisome targeting. A helical transmembrane segment spans residues 232 to 254 (GIVGLCGLVSSILSILTLICPWL).

Belongs to the peroxin-11 family. In terms of assembly, homodimer. Heterodimer with PEX11G. Interacts with PEX19. Interacts with FIS1.

The protein resides in the peroxisome membrane. Its function is as follows. Involved in peroxisomal proliferation. May regulate peroxisome division by recruiting the dynamin-related GTPase DNM1L to the peroxisomal membrane. Promotes membrane protrusion and elongation on the peroxisomal surface. This is Peroxisomal membrane protein 11B (PEX11B) from Bos taurus (Bovine).